The chain runs to 260 residues: O-antigen export system permease protein RfbA (260 aa).

7 helical membrane passes run 31–51 (FLGF…YVLL), 63–83 (FPFF…SVGG), 109–129 (VVVT…VLGM), 139–159 (VVLF…LTYI), 173–193 (IVSN…PLST), 201–221 (SLML…AIFY), and 229–249 (EPLM…SSIF). The ABC transmembrane type-2 domain occupies 32–252 (LGFLWTFLNP…WAASSIFESR (221 aa)).

The protein belongs to the ABC-2 integral membrane protein family.

Its subcellular location is the cell inner membrane. Its function is as follows. May form an ATP-driven O-antigen export apparatus, in association with RfbB. The protein is O-antigen export system permease protein RfbA (rfbA) of Myxococcus xanthus.